The chain runs to 377 residues: Succinyl-diaminopimelate desuccinylase (377 aa).

His66 provides a ligand contact to Zn(2+). The active site involves Asp68. A Zn(2+)-binding site is contributed by Asp99. Residue Glu133 is the Proton acceptor of the active site. Zn(2+)-binding residues include Glu134, Glu162, and His348.

The protein belongs to the peptidase M20A family. DapE subfamily. As to quaternary structure, homodimer. The cofactor is Zn(2+). Requires Co(2+) as cofactor.

The catalysed reaction is N-succinyl-(2S,6S)-2,6-diaminopimelate + H2O = (2S,6S)-2,6-diaminopimelate + succinate. Its pathway is amino-acid biosynthesis; L-lysine biosynthesis via DAP pathway; LL-2,6-diaminopimelate from (S)-tetrahydrodipicolinate (succinylase route): step 3/3. Functionally, catalyzes the hydrolysis of N-succinyl-L,L-diaminopimelic acid (SDAP), forming succinate and LL-2,6-diaminopimelate (DAP), an intermediate involved in the bacterial biosynthesis of lysine and meso-diaminopimelic acid, an essential component of bacterial cell walls. This Alcanivorax borkumensis (strain ATCC 700651 / DSM 11573 / NCIMB 13689 / SK2) protein is Succinyl-diaminopimelate desuccinylase.